The primary structure comprises 430 residues: F-box/kelch-repeat protein At4g33290 (430 aa).

In terms of domain architecture, F-box spans 1-44; that stretch reads MITDLPKDLIEEILSRVSMTSMRVVRLTCKSWNTLSNSESFKKM. 3 Kelch repeats span residues 161-207, 312-363, and 383-430; these read LLRF…CVQG, VPFI…IIEE, and LVRI…RPTR.

The protein is F-box/kelch-repeat protein At4g33290 of Arabidopsis thaliana (Mouse-ear cress).